A 401-amino-acid polypeptide reads, in one-letter code: Carboxybiotin decarboxylase (401 aa).

10 helical membrane passes run 20–40, 46–66, 70–90, 107–127, 131–151, 173–193, 244–264, 275–295, 306–326, and 380–400; these read VISI…YFGF, PLIM…VLFL, VVGT…VNLM, LIAC…FILI, ASII…IIGI, MVLF…AIIA, LCLL…GIAI, LLET…LGAL, ISLI…GGVL, and VCGL…LFLL.

The protein localises to the cell membrane. The enzyme catalyses N(6)-carboxybiotinyl-L-lysyl-[protein] + n Na(+)(in) + H(+) = N(6)-biotinyl-L-lysyl-[protein] + n Na(+)(out) + CO2. Functionally, beta subunit of the biotin-dependent malonate decarboxylase multienzyme complex (EC 7.2.4.4). Acts as an integral membrane-bound carboxybiotin protein decarboxylase by releasing the carboxyl group of the carboxylated biotin carrier MADF. The free energy of the decarboxylation reaction is used to pump Na(+) out of the cell. The sequence is that of Carboxybiotin decarboxylase (madB) from Malonomonas rubra.